The chain runs to 257 residues: Phosphate import ATP-binding protein PstB (257 aa).

Residues 11-252 (IQVRDLNFYY…PAKKQTEDYI (242 aa)) enclose the ABC transporter domain. Residue 43–50 (GPSGCGKS) participates in ATP binding.

Belongs to the ABC transporter superfamily. Phosphate importer (TC 3.A.1.7) family. The complex is composed of two ATP-binding proteins (PstB), two transmembrane proteins (PstC and PstA) and a solute-binding protein (PstS).

It localises to the cell inner membrane. It catalyses the reaction phosphate(out) + ATP + H2O = ADP + 2 phosphate(in) + H(+). Part of the ABC transporter complex PstSACB involved in phosphate import. Responsible for energy coupling to the transport system. This chain is Phosphate import ATP-binding protein PstB, found in Salmonella paratyphi A (strain ATCC 9150 / SARB42).